The sequence spans 491 residues: NADH-ubiquinone oxidoreductase chain 2 (491 aa).

14 helical membrane passes run 11–31 (MIKY…SISI), 38–58 (VHII…VIGI), 74–94 (ELIK…IKMF), 106–126 (ITDE…ISME), 129–149 (NLIT…ILAL), 161–181 (LKYY…IVSI), 210–230 (IALI…HGWL), 238–258 (GMLM…MVLI), 270–290 (AIMF…VGTI), 298–318 (LIRF…LMLA), 330–350 (VYYL…IMGF), 375–395 (GAIV…MTNF), 411–433 (VYLT…NLVK), and 463–483 (IVLG…ILNV).

The protein belongs to the complex I subunit 2 family.

It is found in the mitochondrion inner membrane. The catalysed reaction is a ubiquinone + NADH + 5 H(+)(in) = a ubiquinol + NAD(+) + 4 H(+)(out). Its function is as follows. Core subunit of the mitochondrial membrane respiratory chain NADH dehydrogenase (Complex I) that is believed to belong to the minimal assembly required for catalysis. Complex I functions in the transfer of electrons from NADH to the respiratory chain. The immediate electron acceptor for the enzyme is believed to be ubiquinone. This is NADH-ubiquinone oxidoreductase chain 2 (nad2) from Dictyostelium citrinum (Slime mold).